The chain runs to 65 residues: Beta-defensin 17 (65 aa).

The first 19 residues, 1–19, serve as a signal peptide directing secretion; sequence MKFHLLFFILLFSITILTG. Cystine bridges form between cysteine 35-cysteine 63, cysteine 42-cysteine 56, and cysteine 46-cysteine 64.

The protein belongs to the beta-defensin family.

It is found in the secreted. Its function is as follows. Has antibacterial activity. The polypeptide is Beta-defensin 17 (Defb17) (Rattus norvegicus (Rat)).